Here is a 108-residue protein sequence, read N- to C-terminus: DNA-directed RNA polymerase III subunit RPC10 (108 aa).

Zn(2+)-binding residues include Cys5, Cys8, Cys25, Cys28, Cys69, and Cys72. The C4-type zinc-finger motif lies at 5 to 28 (CPGCGNGLIVEEGQRCHRFACNTC). The segment at 65–107 (TAEPCPKCEHPRAYFMQLQTRYADEPMTTFYKCCNAQCGHRWR) adopts a TFIIS-type zinc-finger fold. The Hairpin signature appears at 88-89 (DE). Zn(2+) contacts are provided by Cys98 and Cys102.

It belongs to the archaeal RpoM/eukaryotic RPA12/RPB9/RPC11 RNA polymerase family. Component of the RNA polymerase III complex consisting of 17 subunits: a ten-subunit horseshoe-shaped catalytic core composed of POLR3A/RPC1, POLR3B/RPC2, POLR1C/RPAC1, POLR1D/RPAC2, POLR3K/RPC10, POLR2E/RPABC1, POLR2F/RPABC2, POLR2H/RPABC3, POLR2K/RPABC4 and POLR2L/RPABC5; a mobile stalk composed of two subunits POLR3H/RPC8 and CRCP/RPC9, protruding from the core and functioning primarily in transcription initiation; and additional subunits homologous to general transcription factors of the RNA polymerase II machinery, POLR3C/RPC3-POLR3F/RPC6-POLR3G/RPC7 heterotrimer required for transcription initiation and POLR3D/RPC4-POLR3E/RPC5 heterodimer involved in both transcription initiation and termination.

It localises to the nucleus. Functionally, core component of RNA polymerase III (Pol III) which synthesizes small non-coding RNAs using the four ribonucleoside triphosphates as substrates. Can mediate Pol I proofreading of the nascent RNA transcript. Anchors into the Pol III active site to constantly monitor transcription fidelity, cleaves mis-incorporated 5'-ribonucleotides and restarts the transcription process. Once Pol III reaches the poly(dT) termination signal, can induce Pol III clamp opening and transcription termination. Pol III plays an important role in sensing and limiting infection by intracellular bacteria and DNA viruses. Acts as a nuclear and cytosolic DNA sensor involved in innate immune response. Can sense non-self dsDNA that serves as template for transcription into dsRNA. The non-self RNA polymerase III transcripts, such as Epstein-Barr virus-encoded RNAs (EBERs) induce type I interferon and NF-kappa-B through the RIG-I pathway. This chain is DNA-directed RNA polymerase III subunit RPC10 (POLR3K), found in Bos taurus (Bovine).